Here is a 175-residue protein sequence, read N- to C-terminus: MGRTLENKQQIVTEIKSLLNDSEMAVVLDYKGLTIKEMSDLRSRLQTTNGICKVTKNSLMRKAIDGDSNWNDLESLLTGTNAFVLIKEDVGGAVKAIQSFQKDTKKSETKGALFEGRLLSDSEIKEIASLPSKEVLMAKIAGALNGVATKIAISINEVPSGLARSLKQHSEKSES.

This sequence belongs to the universal ribosomal protein uL10 family. Part of the ribosomal stalk of the 50S ribosomal subunit. The N-terminus interacts with L11 and the large rRNA to form the base of the stalk. The C-terminus forms an elongated spine to which L12 dimers bind in a sequential fashion forming a multimeric L10(L12)X complex.

In terms of biological role, forms part of the ribosomal stalk, playing a central role in the interaction of the ribosome with GTP-bound translation factors. The sequence is that of Large ribosomal subunit protein uL10 from Prochlorococcus marinus (strain MIT 9301).